The primary structure comprises 199 residues: Superoxide dismutase [Fe] (199 aa).

Histidine 28, histidine 80, aspartate 162, and histidine 166 together coordinate Fe cation.

Belongs to the iron/manganese superoxide dismutase family. As to quaternary structure, homodimer. Fe cation serves as cofactor.

It localises to the cytoplasm. It carries out the reaction 2 superoxide + 2 H(+) = H2O2 + O2. In terms of biological role, destroys superoxide anion radicals which are normally produced within the cells and which are toxic to biological systems. The protein is Superoxide dismutase [Fe] (sodB) of Leptolyngbya boryana (Plectonema boryanum).